Consider the following 377-residue polypeptide: Succinyl-diaminopimelate desuccinylase (377 aa).

His67 provides a ligand contact to Zn(2+). The active site involves Asp69. Zn(2+) is bound at residue Asp100. The active-site Proton acceptor is Glu134. Residues Glu135, Glu163, and His349 each contribute to the Zn(2+) site.

This sequence belongs to the peptidase M20A family. DapE subfamily. In terms of assembly, homodimer. Zn(2+) serves as cofactor. It depends on Co(2+) as a cofactor.

The enzyme catalyses N-succinyl-(2S,6S)-2,6-diaminopimelate + H2O = (2S,6S)-2,6-diaminopimelate + succinate. It functions in the pathway amino-acid biosynthesis; L-lysine biosynthesis via DAP pathway; LL-2,6-diaminopimelate from (S)-tetrahydrodipicolinate (succinylase route): step 3/3. Catalyzes the hydrolysis of N-succinyl-L,L-diaminopimelic acid (SDAP), forming succinate and LL-2,6-diaminopimelate (DAP), an intermediate involved in the bacterial biosynthesis of lysine and meso-diaminopimelic acid, an essential component of bacterial cell walls. This Haemophilus influenzae (strain PittEE) protein is Succinyl-diaminopimelate desuccinylase.